Consider the following 341-residue polypeptide: Fructose-1,6-bisphosphatase, cytosolic (341 aa).

Residues Glu71, Glu100, Asp121, Leu123, and Asp124 each contribute to the Mg(2+) site. Residues 124-127, Asn215, Tyr247, Tyr267, and Lys277 each bind substrate; that span reads DGSS. Glu283 is a binding site for Mg(2+).

This sequence belongs to the FBPase class 1 family. It depends on Mg(2+) as a cofactor.

Its subcellular location is the cytoplasm. It carries out the reaction beta-D-fructose 1,6-bisphosphate + H2O = beta-D-fructose 6-phosphate + phosphate. The chain is Fructose-1,6-bisphosphatase, cytosolic from Spinacia oleracea (Spinach).